A 729-amino-acid polypeptide reads, in one-letter code: Fatty acid oxidation complex subunit alpha (729 aa).

Residues 1–189 form an enoyl-CoA hydratase/isomerase region; it reads MLYKGDTLYL…KIGLVDGVVK (189 aa). Residue Asp296 participates in substrate binding. The interval 311–729 is 3-hydroxyacyl-CoA dehydrogenase; sequence ETPKQAAVLG…ARPVGSLKTA (419 aa). Residues Met324, Asp343, 400–402, Lys407, and Ser429 contribute to the NAD(+) site; that span reads VVE. His450 (for 3-hydroxyacyl-CoA dehydrogenase activity) is an active-site residue. An NAD(+)-binding site is contributed by Asn453. Positions 500 and 660 each coordinate substrate. The tract at residues 707 to 729 is disordered; it reads TRHNEPYYPPVEPARPVGSLKTA.

The protein in the N-terminal section; belongs to the enoyl-CoA hydratase/isomerase family. It in the C-terminal section; belongs to the 3-hydroxyacyl-CoA dehydrogenase family. As to quaternary structure, heterotetramer of two alpha chains (FadB) and two beta chains (FadA).

It carries out the reaction a (3S)-3-hydroxyacyl-CoA + NAD(+) = a 3-oxoacyl-CoA + NADH + H(+). The catalysed reaction is a (3S)-3-hydroxyacyl-CoA = a (2E)-enoyl-CoA + H2O. It catalyses the reaction a 4-saturated-(3S)-3-hydroxyacyl-CoA = a (3E)-enoyl-CoA + H2O. The enzyme catalyses (3S)-3-hydroxybutanoyl-CoA = (3R)-3-hydroxybutanoyl-CoA. It carries out the reaction a (3Z)-enoyl-CoA = a 4-saturated (2E)-enoyl-CoA. The catalysed reaction is a (3E)-enoyl-CoA = a 4-saturated (2E)-enoyl-CoA. Its pathway is lipid metabolism; fatty acid beta-oxidation. Functionally, involved in the aerobic and anaerobic degradation of long-chain fatty acids via beta-oxidation cycle. Catalyzes the formation of 3-oxoacyl-CoA from enoyl-CoA via L-3-hydroxyacyl-CoA. It can also use D-3-hydroxyacyl-CoA and cis-3-enoyl-CoA as substrate. The chain is Fatty acid oxidation complex subunit alpha from Salmonella typhi.